The following is a 109-amino-acid chain: Insulin (109 aa).

The signal sequence occupies residues 1–24 (MAPWMHLLTVLALLALWGPNSVQA). Disulfide bonds link cysteine 31–cysteine 93, cysteine 43–cysteine 106, and cysteine 92–cysteine 97. Residues 56 to 84 (ELEDLQVEQAELGLEAGGLQPSALEMILQ) constitute a propeptide, c peptide.

The protein belongs to the insulin family. As to quaternary structure, heterodimer of a B chain and an A chain linked by two disulfide bonds.

It is found in the secreted. In terms of biological role, insulin decreases blood glucose concentration. It increases cell permeability to monosaccharides, amino acids and fatty acids. It accelerates glycolysis, the pentose phosphate cycle, and glycogen synthesis in liver. The polypeptide is Insulin (INS) (Octodon degus (Degu)).